Here is a 1462-residue protein sequence, read N- to C-terminus: Protein peg1 (1462 aa).

Disordered regions lie at residues 528–563 (SFSK…SRER) and 573–592 (FHST…SIAI). Composition is skewed to low complexity over residues 538-552 (SSNS…RLGL) and 574-589 (HSTS…HSPS). At serine 599 the chain carries Phosphoserine. Positions 838-928 (SSTHQEHLSK…NCSEESLDDH (91 aa)) are disordered. The span at 847-866 (KNLPTLNTSSSSNSSQTDLL) shows a compositional bias: low complexity. Residues 870 to 896 (GKGETKETEMQSPIESKEGLLSKDTHI) are compositionally biased toward basic and acidic residues. Serine 1221 is subject to Phosphoserine. Positions 1342–1367 (TLIAEIADLQGLYEFTQQRLQSLNTE) form a coiled coil.

It belongs to the CLASP family. Interacts with microtubules. Interacts with dhc1, mal3 and tea1.

It is found in the cytoplasm. Its subcellular location is the cytoskeleton. It localises to the spindle. The protein resides in the microtubule organizing center. The protein localises to the spindle pole body. Its function is as follows. Microtubule binding protein that regulates the stability of dynamic microtubules. Required for mitotic spindle formation. The sequence is that of Protein peg1 (peg1) from Schizosaccharomyces pombe (strain 972 / ATCC 24843) (Fission yeast).